The sequence spans 354 residues: Sulfate/thiosulfate import ATP-binding protein CysA (354 aa).

Residues 3-237 (IEVRGLSKRF…PATPFVYGFL (235 aa)) form the ABC transporter domain. Position 35 to 42 (35 to 42 (GPSGCGKT)) interacts with ATP.

The protein belongs to the ABC transporter superfamily. Sulfate/tungstate importer (TC 3.A.1.6) family. In terms of assembly, the complex is composed of two ATP-binding proteins (CysA), two transmembrane proteins (CysT and CysW) and a solute-binding protein (CysP).

Its subcellular location is the cell inner membrane. The catalysed reaction is sulfate(out) + ATP + H2O = sulfate(in) + ADP + phosphate + H(+). It carries out the reaction thiosulfate(out) + ATP + H2O = thiosulfate(in) + ADP + phosphate + H(+). Its function is as follows. Part of the ABC transporter complex CysAWTP involved in sulfate/thiosulfate import. Responsible for energy coupling to the transport system. The sequence is that of Sulfate/thiosulfate import ATP-binding protein CysA from Bordetella bronchiseptica (strain ATCC BAA-588 / NCTC 13252 / RB50) (Alcaligenes bronchisepticus).